The sequence spans 363 residues: Serpentine receptor class T-55 (363 aa).

Positions 1 to 18 (MKLRHFLIFLMLIPISSS) are cleaved as a signal peptide. 7 helical membrane passes run 70–90 (IYYI…IWVF), 107–127 (VFIG…PGFV), 143–163 (IVGK…AFLG), 187–207 (WLTV…TVLF), 231–251 (FLYF…ACLC), 278–298 (ICIS…FVLP), and 303–323 (FFHV…IMYI).

This sequence belongs to the nematode receptor-like protein srt family.

The protein resides in the membrane. The chain is Serpentine receptor class T-55 (srt-55) from Caenorhabditis elegans.